The following is a 205-amino-acid chain: Protein N-terminal glutamine amidohydrolase (205 aa).

Active-site residues include C20, H74, and D90.

It belongs to the NTAQ1 family. Monomer.

It carries out the reaction N-terminal L-glutaminyl-[protein] + H2O = N-terminal L-glutamyl-[protein] + NH4(+). In terms of biological role, mediates the side-chain deamidation of N-terminal glutamine residues to glutamate, an important step in N-end rule pathway of protein degradation. Conversion of the resulting N-terminal glutamine to glutamate renders the protein susceptible to arginylation, polyubiquitination and degradation as specified by the N-end rule. Does not act on substrates with internal or C-terminal glutamine and does not act on non-glutamine residues in any position. The chain is Protein N-terminal glutamine amidohydrolase (tun) from Drosophila melanogaster (Fruit fly).